A 154-amino-acid chain; its full sequence is Endoribonuclease YbeY (154 aa).

Zn(2+) is bound by residues H116, H120, and H126.

The protein belongs to the endoribonuclease YbeY family. It depends on Zn(2+) as a cofactor.

The protein localises to the cytoplasm. Single strand-specific metallo-endoribonuclease involved in late-stage 70S ribosome quality control and in maturation of the 3' terminus of the 16S rRNA. The chain is Endoribonuclease YbeY from Chromohalobacter salexigens (strain ATCC BAA-138 / DSM 3043 / CIP 106854 / NCIMB 13768 / 1H11).